Reading from the N-terminus, the 210-residue chain is Small ribosomal subunit protein uS3 (210 aa).

In terms of domain architecture, KH type-2 spans 38–106; that stretch reads LRSFLKKRLY…EVYLNIQEVR (69 aa).

Belongs to the universal ribosomal protein uS3 family. In terms of assembly, part of the 30S ribosomal subunit. Forms a tight complex with proteins S10 and S14.

Binds the lower part of the 30S subunit head. Binds mRNA in the 70S ribosome, positioning it for translation. The chain is Small ribosomal subunit protein uS3 from Geotalea uraniireducens (strain Rf4) (Geobacter uraniireducens).